Consider the following 271-residue polypeptide: Ubiquitin thioesterase OTUB1 (271 aa).

N-acetylalanine is present on alanine 2. Serine 16 carries the post-translational modification Phosphoserine. Tyrosine 26 carries the post-translational modification Phosphotyrosine; by SRC. Residues 80–271 enclose the OTU domain; the sequence is SYIRKTRPDG…RPGHYDILYK (192 aa). The active site involves aspartate 88. Catalysis depends on cysteine 91, which acts as the Nucleophile. 2 ubiquitin-conjugating enzyme E2 binding regions span residues 130–138 and 169–177; these read FTEFTIEDF and DYLVVYLRL. The interval 189-195 is free ubiquitin binding; sequence FFEHFIE. A ubiquitin-conjugating enzyme E2 binding region spans residues 206 to 213; it reads QEVEPMCK. Free ubiquitin binding stretches follow at residues 214–221 and 245–251; these read ESDHIHII and NPHIFPE. Residue histidine 265 is part of the active site.

The protein belongs to the peptidase C65 family. As to quaternary structure, interacts with FUS and RACK1. Interacts with UBE2D1/UBCH5A, UBE2W/UBC16 and UBE2N/UBC13. In terms of assembly, interacts with RNF128. Forms a ternary complex with RNF128 and USP8. Interacts with the C-terminal UCH catalytic domain of USP8. Interacts with RNF128. Does not associate with USP8. Post-translationally, phosphorylation at Tyr-26 by SRC and SRMS promotes deubiquitination of RPTOR via a non-catalytic process. Isoform 1 is ubiquitous. Isoform 2 is expressed only in lymphoid tissues such as tonsils, lymph nodes and spleen, as well as peripheral blood mononuclear cells.

It localises to the cytoplasm. It carries out the reaction Thiol-dependent hydrolysis of ester, thioester, amide, peptide and isopeptide bonds formed by the C-terminal Gly of ubiquitin (a 76-residue protein attached to proteins as an intracellular targeting signal).. By free ubiquitin: binding of free ubiquitin triggers conformational changes in the OTU domain and formation of a ubiquitin-binding helix in the N-terminus, promoting binding of the conjugated donor ubiquitin in UBE2N/UBC13 to OTUB1. Its function is as follows. Hydrolase that can specifically remove 'Lys-48'-linked conjugated ubiquitin from proteins and plays an important regulatory role at the level of protein turnover by preventing degradation. Regulator of T-cell anergy, a phenomenon that occurs when T-cells are rendered unresponsive to antigen rechallenge and no longer respond to their cognate antigen. Acts via its interaction with RNF128/GRAIL, a crucial inductor of CD4 T-cell anergy. Isoform 1 destabilizes RNF128, leading to prevent anergy. In contrast, isoform 2 stabilizes RNF128 and promotes anergy. Surprisingly, it regulates RNF128-mediated ubiquitination, but does not deubiquitinate polyubiquitinated RNF128. Deubiquitinates estrogen receptor alpha (ESR1). Mediates deubiquitination of 'Lys-48'-linked polyubiquitin chains, but not 'Lys-63'-linked polyubiquitin chains. Not able to cleave di-ubiquitin. Also capable of removing NEDD8 from NEDD8 conjugates, but with a much lower preference compared to 'Lys-48'-linked ubiquitin. Functionally, plays a key non-catalytic role in DNA repair regulation by inhibiting activity of RNF168, an E3 ubiquitin-protein ligase that promotes accumulation of 'Lys-63'-linked histone H2A and H2AX at DNA damage sites. Inhibits RNF168 independently of ubiquitin thioesterase activity by binding and inhibiting UBE2N/UBC13, the E2 partner of RNF168, thereby limiting spreading of 'Lys-63'-linked histone H2A and H2AX marks. Inhibition occurs by binding to free ubiquitin: free ubiquitin acts as an allosteric regulator that increases affinity for UBE2N/UBC13 and disrupts interaction with UBE2V1. The OTUB1-UBE2N/UBC13-free ubiquitin complex adopts a configuration that mimics a cleaved 'Lys48'-linked di-ubiquitin chain. Acts as a regulator of mTORC1 and mTORC2 complexes. When phosphorylated at Tyr-26, acts as an activator of the mTORC1 complex by mediating deubiquitination of RPTOR via a non-catalytic process: acts by binding and inhibiting the activity of the ubiquitin-conjugating enzyme E2 (UBE2D1/UBCH5A, UBE2W/UBC16 and UBE2N/UBC13), thereby preventing ubiquitination of RPTOR. Can also act as an inhibitor of the mTORC1 and mTORC2 complexes in response to amino acids by mediating non-catalytic deubiquitination of DEPTOR. The sequence is that of Ubiquitin thioesterase OTUB1 (OTUB1) from Homo sapiens (Human).